A 943-amino-acid chain; its full sequence is TBC1 domain family member 2B (943 aa).

The tract at residues 1-29 (MPGVEDPCDSQGTPPEEPSTSVAPGEAAK) is disordered. Polar residues predominate over residues 10-22 (SQGTPPEEPSTSV). Residues 32 to 129 (SPRLCGYLAK…WLQELQQKRW (98 aa)) form the PH domain. The stretch at 315 to 514 (RMESDVLLKL…ARYSNLEAKM (200 aa)) forms a coiled coil. The Rab-GAP TBC domain occupies 642–836 (GIPHEHRSRM…RIWDSLLYEG (195 aa)).

It localises to the early endosome. Its function is as follows. GTPase-activating protein that plays a role in the early steps of endocytosis. The protein is TBC1 domain family member 2B (tbc1d2b) of Xenopus tropicalis (Western clawed frog).